A 325-amino-acid chain; its full sequence is Putative ankyrin repeat protein RF_0011 (325 aa).

ANK repeat units follow at residues 63–94 (NGNT…AINM), 99–130 (RGQP…NINA), and 134–164 (CGRT…EMII).

The polypeptide is Putative ankyrin repeat protein RF_0011 (Rickettsia felis (strain ATCC VR-1525 / URRWXCal2) (Rickettsia azadi)).